The primary structure comprises 302 residues: Methionyl-tRNA formyltransferase (302 aa).

109 to 112 contacts (6S)-5,6,7,8-tetrahydrofolate; it reads SILP.

It belongs to the Fmt family.

The catalysed reaction is L-methionyl-tRNA(fMet) + (6R)-10-formyltetrahydrofolate = N-formyl-L-methionyl-tRNA(fMet) + (6S)-5,6,7,8-tetrahydrofolate + H(+). Its function is as follows. Attaches a formyl group to the free amino group of methionyl-tRNA(fMet). The formyl group appears to play a dual role in the initiator identity of N-formylmethionyl-tRNA by promoting its recognition by IF2 and preventing the misappropriation of this tRNA by the elongation apparatus. This is Methionyl-tRNA formyltransferase from Campylobacter hominis (strain ATCC BAA-381 / DSM 21671 / CCUG 45161 / LMG 19568 / NCTC 13146 / CH001A).